A 525-amino-acid chain; its full sequence is GMP synthase [glutamine-hydrolyzing] (525 aa).

The region spanning 9-207 (RILILDFGSQ…VMDICKCEKL (199 aa)) is the Glutamine amidotransferase type-1 domain. The active-site Nucleophile is C86. Catalysis depends on residues H181 and E183. Positions 208–400 (WTAGAIIEDA…LGLPYDMLYR (193 aa)) constitute a GMPS ATP-PPase domain. 235–241 (SGGVDSS) serves as a coordination point for ATP.

In terms of assembly, homodimer.

It carries out the reaction XMP + L-glutamine + ATP + H2O = GMP + L-glutamate + AMP + diphosphate + 2 H(+). It participates in purine metabolism; GMP biosynthesis; GMP from XMP (L-Gln route): step 1/1. Functionally, catalyzes the synthesis of GMP from XMP. The protein is GMP synthase [glutamine-hydrolyzing] of Alteromonas mediterranea (strain DSM 17117 / CIP 110805 / LMG 28347 / Deep ecotype).